The sequence spans 100 residues: UPF0473 protein lwe1514 (100 aa).

This sequence belongs to the UPF0473 family.

The protein is UPF0473 protein lwe1514 of Listeria welshimeri serovar 6b (strain ATCC 35897 / DSM 20650 / CCUG 15529 / CIP 8149 / NCTC 11857 / SLCC 5334 / V8).